Reading from the N-terminus, the 224-residue chain is 2-C-methyl-D-erythritol 4-phosphate cytidylyltransferase (224 aa).

This sequence belongs to the IspD/TarI cytidylyltransferase family. IspD subfamily.

It carries out the reaction 2-C-methyl-D-erythritol 4-phosphate + CTP + H(+) = 4-CDP-2-C-methyl-D-erythritol + diphosphate. The protein operates within isoprenoid biosynthesis; isopentenyl diphosphate biosynthesis via DXP pathway; isopentenyl diphosphate from 1-deoxy-D-xylulose 5-phosphate: step 2/6. Catalyzes the formation of 4-diphosphocytidyl-2-C-methyl-D-erythritol from CTP and 2-C-methyl-D-erythritol 4-phosphate (MEP). The chain is 2-C-methyl-D-erythritol 4-phosphate cytidylyltransferase from Bordetella petrii (strain ATCC BAA-461 / DSM 12804 / CCUG 43448).